Reading from the N-terminus, the 342-residue chain is Protein pelota homolog (342 aa).

It belongs to the eukaryotic release factor 1 family. Pelota subfamily. Monomer. The cofactor is a divalent metal cation.

Its subcellular location is the cytoplasm. Its function is as follows. May function in recognizing stalled ribosomes, interact with stem-loop structures in stalled mRNA molecules, and effect endonucleolytic cleavage of the mRNA. May play a role in the release non-functional ribosomes and degradation of damaged mRNAs. Has endoribonuclease activity. In Methanocorpusculum labreanum (strain ATCC 43576 / DSM 4855 / Z), this protein is Protein pelota homolog.